A 246-amino-acid polypeptide reads, in one-letter code: Pyridoxine 5'-phosphate synthase (246 aa).

Asn7 serves as a coordination point for 3-amino-2-oxopropyl phosphate. 9–10 (DH) is a binding site for 1-deoxy-D-xylulose 5-phosphate. Arg18 is a binding site for 3-amino-2-oxopropyl phosphate. His43 functions as the Proton acceptor in the catalytic mechanism. Arg45 and His50 together coordinate 1-deoxy-D-xylulose 5-phosphate. Residue Glu70 is the Proton acceptor of the active site. Thr100 is a 1-deoxy-D-xylulose 5-phosphate binding site. Residue His190 is the Proton donor of the active site. Residues Gly191 and 212 to 213 (GH) each bind 3-amino-2-oxopropyl phosphate.

This sequence belongs to the PNP synthase family. As to quaternary structure, homooctamer; tetramer of dimers.

Its subcellular location is the cytoplasm. It carries out the reaction 3-amino-2-oxopropyl phosphate + 1-deoxy-D-xylulose 5-phosphate = pyridoxine 5'-phosphate + phosphate + 2 H2O + H(+). It functions in the pathway cofactor biosynthesis; pyridoxine 5'-phosphate biosynthesis; pyridoxine 5'-phosphate from D-erythrose 4-phosphate: step 5/5. In terms of biological role, catalyzes the complicated ring closure reaction between the two acyclic compounds 1-deoxy-D-xylulose-5-phosphate (DXP) and 3-amino-2-oxopropyl phosphate (1-amino-acetone-3-phosphate or AAP) to form pyridoxine 5'-phosphate (PNP) and inorganic phosphate. This Prochlorococcus marinus (strain SARG / CCMP1375 / SS120) protein is Pyridoxine 5'-phosphate synthase.